The following is a 195-amino-acid chain: Holliday junction branch migration complex subunit RuvA (195 aa).

The tract at residues 1-61 (MYEYLDGVVV…ENDQTLYGFK (61 aa)) is domain I. The segment at 62–139 (KAEDKELFLN…AVENEVGTLF (78 aa)) is domain II. Positions 139–143 (FDLST) are flexible linker. Positions 144 to 195 (TSNQALDEALEALIALGYSEKEVKKLTKKLSEQTDRTTDQYISSGLKLLMKG) are domain III.

The protein belongs to the RuvA family. In terms of assembly, homotetramer. Forms an RuvA(8)-RuvB(12)-Holliday junction (HJ) complex. HJ DNA is sandwiched between 2 RuvA tetramers; dsDNA enters through RuvA and exits via RuvB. An RuvB hexamer assembles on each DNA strand where it exits the tetramer. Each RuvB hexamer is contacted by two RuvA subunits (via domain III) on 2 adjacent RuvB subunits; this complex drives branch migration. In the full resolvosome a probable DNA-RuvA(4)-RuvB(12)-RuvC(2) complex forms which resolves the HJ.

It localises to the cytoplasm. In terms of biological role, the RuvA-RuvB-RuvC complex processes Holliday junction (HJ) DNA during genetic recombination and DNA repair, while the RuvA-RuvB complex plays an important role in the rescue of blocked DNA replication forks via replication fork reversal (RFR). RuvA specifically binds to HJ cruciform DNA, conferring on it an open structure. The RuvB hexamer acts as an ATP-dependent pump, pulling dsDNA into and through the RuvAB complex. HJ branch migration allows RuvC to scan DNA until it finds its consensus sequence, where it cleaves and resolves the cruciform DNA. This Pediococcus pentosaceus (strain ATCC 25745 / CCUG 21536 / LMG 10740 / 183-1w) protein is Holliday junction branch migration complex subunit RuvA.